A 156-amino-acid chain; its full sequence is Small ribosomal subunit protein uS7 (156 aa).

This sequence belongs to the universal ribosomal protein uS7 family. Part of the 30S ribosomal subunit. Contacts proteins S9 and S11.

In terms of biological role, one of the primary rRNA binding proteins, it binds directly to 16S rRNA where it nucleates assembly of the head domain of the 30S subunit. Is located at the subunit interface close to the decoding center, probably blocks exit of the E-site tRNA. In Azotobacter vinelandii (strain DJ / ATCC BAA-1303), this protein is Small ribosomal subunit protein uS7.